Here is a 291-residue protein sequence, read N- to C-terminus: MADLDDIKDGKDFGIGVPQQNPAFTLKGCGSLDWGMQSRLARIFNPKTNRTVMLAFDHGYFQGPTTGLERIDINIAPLFEYADVLMCTRGILRSIVPAAANRPVVLRASGANSILTDLSNEAVAVAMEDALRLNSCAVAAQVYIGTEHEHQSIKNIIQLVDQGIRYGMPTMAVTGVGKDMARDQRYFSLATRIAAEMGAQVIKTYYVDSGFERIAAGCPVPIVIAGGKKLPERDALEMCYQAIDQGASGVDMGRNIFQSEAPIAMLKAVHAVVHKNENAETAYKLFLHEKG.

Catalysis depends on Lys203, which acts as the Schiff-base intermediate with substrate.

It belongs to the DeoC/FbaB aldolase family. As to quaternary structure, homodecamer.

It localises to the cytoplasm. The catalysed reaction is dihydroxyacetone phosphate + acetyl-CoA = 3-hydroxy-2,4-dioxopentyl phosphate + CoA. Involved in the degradation of phospho-AI-2, thereby terminating induction of the lsr operon and closing the AI-2 signaling cycle. Catalyzes the transfer of an acetyl moiety from 3-hydroxy-5-phosphonooxypentane-2,4-dione to CoA to form glycerone phosphate and acetyl-CoA. The protein is 3-hydroxy-5-phosphonooxypentane-2,4-dione thiolase of Yersinia enterocolitica serotype O:8 / biotype 1B (strain NCTC 13174 / 8081).